The primary structure comprises 195 residues: Probable GTP-binding protein EngB (195 aa).

Residues 24-195 (DWPEIALAGR…EAWEAILRYL (172 aa)) enclose the EngB-type G domain. GTP-binding positions include 32–39 (GRSNVGKS), 59–63 (GKTQL), 77–80 (DVPG), 144–147 (TKAD), and 176–178 (FSS). Mg(2+) is bound by residues Ser-39 and Thr-61.

The protein belongs to the TRAFAC class TrmE-Era-EngA-EngB-Septin-like GTPase superfamily. EngB GTPase family. Mg(2+) is required as a cofactor.

Its function is as follows. Necessary for normal cell division and for the maintenance of normal septation. The chain is Probable GTP-binding protein EngB from Lactococcus lactis subsp. lactis (strain IL1403) (Streptococcus lactis).